The following is a 158-amino-acid chain: Ethylene-responsive transcription factor ERF120 (158 aa).

The segment at residues 86–147 (KHKGVRKKPS…SARRGTKNGE (62 aa)) is a DNA-binding region (AP2/ERF). The interval 134 to 158 (VGRRSARRGTKNGEEASTKKTTEKN) is disordered. The span at 144–158 (KNGEEASTKKTTEKN) shows a compositional bias: basic and acidic residues.

The protein belongs to the AP2/ERF transcription factor family. ERF subfamily.

The protein resides in the nucleus. Probably acts as a transcriptional activator. Binds to the GCC-box pathogenesis-related promoter element. May be involved in the regulation of gene expression by stress factors and by components of stress signal transduction pathways. This is Ethylene-responsive transcription factor ERF120 (ERF120) from Arabidopsis thaliana (Mouse-ear cress).